Here is a 371-residue protein sequence, read N- to C-terminus: MSLISKSLARIECSPFFYPRASEITTGKRITSPQIRLYTAAAVGGKTGNGERKQRAKAPAKTPEAVTPVKPLEIASVTATTENELPRPNEIAYESEVANWVNLIGFVDQPVQFEASSDGKFWAGTVISQRSASDSSGFWIPIIFEGDLAKTAARYVSKDDQIHVSGKLFIDSPPPNMTYAQANVQVLVQNLNFIQPMSPSPSPFMVMSSSEKEESGIKKQPARAKQDIVIDEASDSWNHLIENPKEWWDHRENKVNGLVKPRHPDFKSKDSSFSLWLNKAPNWVLPKLEGLEFDVLVPKARVVKQLKGEESWKDLVQNPDKWWDNRIDKRNAKAPDFKHKETGEALWLNESPTWVLPKLPPVKKKQESIVF.

Residues 1 to 20 (MSLISKSLARIECSPFFYPR) constitute a chloroplast transit peptide. The tract at residues 45–64 (GKTGNGERKQRAKAPAKTPE) is disordered. In terms of domain architecture, SSB spans 97 to 195 (VANWVNLIGF…VLVQNLNFIQ (99 aa)). PDF region stretches follow at residues 237 to 289 (WNHL…PKLE) and 312 to 360 (WKDL…PKLP).

As to expression, expressed in the floral abscission zone.

Its subcellular location is the plastid. It is found in the chloroplast. Its function is as follows. Binds preferentially single-stranded DNA. Does not bind to RNA. The chain is Protein OSB2, chloroplastic (OSB2) from Arabidopsis thaliana (Mouse-ear cress).